Here is a 288-residue protein sequence, read N- to C-terminus: Rhythmically expressed gene 5 protein (288 aa).

As to expression, expressed in head, but not in the body. Expression levels oscillate with the circadian rhythm.

Involved in the generation of biological rhythms (Potential). In the head, oscillates in abundance with a daily peak during early night, even under constant darkness. Oscillation is dependent on period (per) function. The sequence is that of Rhythmically expressed gene 5 protein (Reg-5) from Drosophila melanogaster (Fruit fly).